A 234-amino-acid chain; its full sequence is UstYa family oxidase phomYd' (234 aa).

Residues 1–26 are disordered; it reads MEKFFSPSRHNYADLSPTDVPASEES. Residues 47-69 form a helical membrane-spanning segment; sequence VLVNRLLAASTVALVMVSLWLGW. An HXXHC 1 motif is present at residues 151 to 155; it reads HWDHC. Residue Asn208 is glycosylated (N-linked (GlcNAc...) asparagine).

The protein belongs to the ustYa family.

It is found in the membrane. Its pathway is mycotoxin biosynthesis. Functionally, ustYa family oxidase; part of the gene cluster that mediates the biosynthesis of the phomopsins, a group of hexapeptide mycotoxins which infects lupins and causes lupinosis disease in livestock. Within the pathway, phomYd' catalyzes the desaturation of the Asp moiety into 2,3-dehydroaspartic acid (dAsp). The pathway starts with the processing of the precursor phomA' by several endopeptidases including kexin proteases as well as the cluster-specific S41 family peptidase phomP1 and the oligopeptidase phomG' to produce 10 identical copies of the hexapeptide Tyr-Val-Ile-Pro-Ile-Asp. After being excised from the precursor peptide, the core peptides are cyclized and modified post-translationally by enzymes encoded within the gene cluster. The timing and order of proteolysis of the phomA' precursor and PTMs are still unknown. Two tyrosinase-like enzymes, phomQ1' and phomQ2, catalyze the chlorination and hydroxylation of Tyr, respectively. PhomYb, is proposed to be involved in the construction of the macrocyclic structure. The other 4 ustYa family proteins may be involved in PTMs that generate the unique structure of phomopsin A. PhomYa' is required for the hydroxylation of C-beta of Tyr. PhomYc', phomYd', and phomYe are responsible for the biosynthesis of 2,3-dehydroisoleucine (dIle), 2,3-dehydroaspartic acid (dAsp), and 3,4-dehydroproline (dPro), respectively. While dIle formation by phomYc' is indispensable for the installation of dAsp by phomYd', the order of the other PTMs have not been elucidated yet. Most of the biosynthetic enzymes likely have broad substrate specificity, and thus, there might be a metabolic grid from a precursor to phomopsin A. The enzyme(s) responsible for the biosynthesis of 3,4-dehydrovaline (dVal) have also not been identified yet. Finally, phomM' acts as an S-adenosylmethionine-dependent alpha-N-methyltransferase that catalyzes two successive N-methylation reactions, converting N-desmethyl-phomopsin A to phomopsin A and phomopsin A further to an N,N-dimethylated congener called phomopsin E. The sequence is that of UstYa family oxidase phomYd' from Diaporthe leptostromiformis (Lupinosis disease fungus).